The following is a 323-amino-acid chain: Sphingolipid delta(4)-desaturase DES1 (323 aa).

A lipid anchor (N-myristoyl glycine) is attached at G2. Transmembrane regions (helical) follow at residues 41-61 and 68-88; these read PNLI…FYIV and WVIF…TLAI. A Histidine box-1 motif is present at residues 89–93; the sequence is HEIAH. The helical transmembrane segment at 102–122 threads the bilayer; that stretch reads AMWNRWFGMFANLPIGIPYSI. Positions 128 to 132 match the Histidine box-2 motif; the sequence is HMDHH. A run of 3 helical transmembrane segments spans residues 152 to 172, 184 to 204, and 209 to 229; these read FFCT…FYAF, YLEV…YYFL, and LVYM…SGHF. The Histidine box-3 motif lies at 259-263; that stretch reads HNEHH. S307 carries the phosphoserine modification.

Belongs to the fatty acid desaturase type 1 family. DEGS subfamily. In terms of assembly, interacts with RLBP1; the interaction increases synthesis of chromophore-precursors by DEGS1. In terms of processing, myristoylation can target the enzyme to the mitochondria leading to an increase in ceramide levels. Ubiquitous.

It is found in the mitochondrion membrane. Its subcellular location is the endoplasmic reticulum membrane. It catalyses the reaction an N-acylsphinganine + 2 Fe(II)-[cytochrome b5] + O2 + 2 H(+) = an N-acylsphing-4-enine + 2 Fe(III)-[cytochrome b5] + 2 H2O. The catalysed reaction is all-trans-retinol = 11-cis-retinol. The enzyme catalyses all-trans-retinol = 9-cis-retinol. It carries out the reaction all-trans-retinol = 13-cis-retinol. It catalyses the reaction 11-cis-retinol = 13-cis-retinol. The catalysed reaction is 11-cis-retinol = 9-cis-retinol. Has sphingolipid-delta-4-desaturase activity. Converts D-erythro-sphinganine to D-erythro-sphingosine (E-sphing-4-enine). Catalyzes the equilibrium isomerization of retinols. The chain is Sphingolipid delta(4)-desaturase DES1 from Homo sapiens (Human).